The primary structure comprises 672 residues: MTEPSLLPAAKMEGLALLPLTSPCPRIPRARISRQPGRWAHLGCSPGLSTGPTNLQQHPQKPRPADCSHSRLSWAESLSMDGFWMEVERIQQRAEVKKEDCGEGRSQLLEGDTESQWLQDTGLSGLAGGLGLDGDHQGLLSTLTQTQVAAVCRRLDIYARSARRRQKAPVRDVRDIFGVFTSRELAPENGVSGMKWTKINSEDSASPLRSAEPGGPQELAGMEEVFNMDSAYSEQAAVLLQRAWPSPGGTTAWGKGPLPRFRIPKGRLGVTRIGDLSSRDMKKIPPLALIELTALYDILGLDLKRCKGGKWKGPDSGLFGVPLHSLLEADHRVFPSTQVPLLLQALLSCLEKRGLDTEGILRVPGSQARVKGLEQKLERDFYAGLVSWDKVHPNDASDLLKRFLRKLPVPLLTAEYLPAFASVPDIPDLKQRLQALHLLVLLLPEPNRNTLKALLEFLRKVAAQEQHNKMTLWNVSTVMVPSLFLPRGRPPKLTKGGKQLAEGAAEVVCMMVQYQDLLWTVASFLVAQVRKLNDSNGRRSQLCDGGLKTWLWRTHVDRDKAGEGLEATPKVAKIQVQATWPSMDLLQVPLNPSTRVTHVLKLFTEHLNPGSQPEEGSENPNSLLSHNTKPVTFLVYEVGGNIGERRLDPDAYLLDLYRANPHGEWVIRQSPT.

The tract at residues 43–68 is disordered; it reads GCSPGLSTGPTNLQQHPQKPRPADCS. Polar residues predominate over residues 47–59; that stretch reads GLSTGPTNLQQHP. The 199-residue stretch at 321-519 folds into the Rho-GAP domain; sequence VPLHSLLEAD…MMVQYQDLLW (199 aa).

Functionally, GTPase activator for the Rho-type GTPases by converting them to an inactive GDP-bound state. The chain is Rho GTPase-activating protein 40 from Mus musculus (Mouse).